A 601-amino-acid polypeptide reads, in one-letter code: Leucine-rich repeat-containing protein 40 (601 aa).

LRR repeat units lie at residues 33 to 56 (ARKS…VWRL), 79 to 101 (QTDL…DVKL), 102 to 124 (LPAL…SIGD), 125 to 148 (LEQL…VWRL), 150 to 170 (NLRC…DLGQ), 171 to 193 (LVNL…SLAN), 194 to 217 (LQNL…ISQM), 219 to 239 (NLRM…VLAQ), 240 to 264 (MESL…CCKT), 266 to 285 (KELH…HLKH), 286 to 308 (LNAL…EITL), 309 to 334 (LQGL…TLPK), 336 to 355 (KSLS…LLTK), 397 to 420 (IKTL…VFDA), 423 to 446 (GNPV…IVDL), 447 to 469 (KDSL…DFCH), 470 to 492 (LKQL…ELEG), 493 to 516 (LIKL…LYRI), 518 to 539 (SLET…QMKT), 540 to 563 (LSRL…LGNC), and 565 to 586 (SLRA…ILIK).

The sequence is that of Leucine-rich repeat-containing protein 40 (lrrc40) from Danio rerio (Zebrafish).